The primary structure comprises 432 residues: Cytochrome c biogenesis protein CcsB (432 aa).

3 helical membrane passes run 14 to 34 (LRIA…GTAI), 72 to 92 (SSWF…CSWR), and 162 to 182 (VGPM…VWGS).

The protein belongs to the Ccs1/CcsB family. In terms of assembly, may interact with CcsA.

The protein resides in the cellular thylakoid membrane. Its function is as follows. Required during biogenesis of c-type cytochromes (cytochrome c6 and cytochrome f) at the step of heme attachment. This is Cytochrome c biogenesis protein CcsB from Prochlorococcus marinus (strain MIT 9303).